The following is a 282-amino-acid chain: Large ribosomal subunit protein uL2c (282 aa).

The tract at residues S230 to L261 is disordered.

The protein belongs to the universal ribosomal protein uL2 family. Part of the 50S ribosomal subunit.

Its subcellular location is the plastid. The chain is Large ribosomal subunit protein uL2c (rpl2) from Helicosporidium sp. subsp. Simulium jonesii (Green alga).